We begin with the raw amino-acid sequence, 98 residues long: Feather beta keratin (98 aa).

Serine 2 bears the N-acetylserine mark.

The protein belongs to the avian keratin family. The avian keratins (F-ker, S-ker, C-ker and B-ker) are a complex mixture of very similar polypeptides.

The chain is Feather beta keratin from Cathartes aura (Turkey vulture).